Reading from the N-terminus, the 103-residue chain is Large ribosomal subunit protein eL42 (103 aa).

The interval 37-56 (GKRRYDRKQSGFGGQTKPVF) is disordered.

The protein belongs to the eukaryotic ribosomal protein eL42 family.

The protein is Large ribosomal subunit protein eL42 (rpl36a) of Dictyostelium discoideum (Social amoeba).